Here is a 77-residue protein sequence, read N- to C-terminus: Small ribosomal subunit protein bS21 (77 aa).

A disordered region spans residues 55–77; it reads RKLARKRAQREGLMSNGRISALR.

Belongs to the bacterial ribosomal protein bS21 family.

The protein is Small ribosomal subunit protein bS21 of Bartonella quintana (strain Toulouse) (Rochalimaea quintana).